A 489-amino-acid polypeptide reads, in one-letter code: UDP-N-acetylmuramate--L-alanine ligase (489 aa).

128-134 lines the ATP pocket; that stretch reads GTHGKTT.

The protein belongs to the MurCDEF family.

The protein resides in the cytoplasm. It carries out the reaction UDP-N-acetyl-alpha-D-muramate + L-alanine + ATP = UDP-N-acetyl-alpha-D-muramoyl-L-alanine + ADP + phosphate + H(+). It participates in cell wall biogenesis; peptidoglycan biosynthesis. Cell wall formation. The polypeptide is UDP-N-acetylmuramate--L-alanine ligase (Shewanella pealeana (strain ATCC 700345 / ANG-SQ1)).